A 147-amino-acid chain; its full sequence is Hemoglobin subunit beta (147 aa).

N-acetylvaline is present on valine 2. The region spanning 3-147 (HLTGEEKAAV…VANALAHKYH (145 aa)) is the Globin domain. At threonine 13 the chain carries Phosphothreonine. Serine 45 bears the Phosphoserine mark. N6-acetyllysine is present on lysine 60. Histidine 64 contributes to the heme b binding site. Lysine 83 bears the N6-acetyllysine mark. Position 93 (histidine 93) interacts with heme b. An S-nitrosocysteine modification is found at cysteine 94. The residue at position 145 (lysine 145) is an N6-acetyllysine.

It belongs to the globin family. In terms of assembly, heterotetramer of two alpha chains and two beta chains. Red blood cells.

In terms of biological role, involved in oxygen transport from the lung to the various peripheral tissues. In Lagothrix lagotricha (Brown woolly monkey), this protein is Hemoglobin subunit beta (HBB).